Consider the following 462-residue polypeptide: U2 small nuclear ribonucleoprotein auxiliary factor 35 kDa subunit-related protein 2 (462 aa).

Residues 1-13 (METAGATADATAG) are compositionally biased toward low complexity. Disordered regions lie at residues 1-22 (METAGATADATAGPQKLSRKKY), 44-66 (AELAQKEEEEDPLAEEKRLEEER), and 115-138 (WEEQQRKEREEEEQKRQEKREREE). Residue Lys49 forms a Glycyl lysine isopeptide (Lys-Gly) (interchain with G-Cter in SUMO2) linkage. Basic and acidic residues predominate over residues 57–66 (AEEKRLEEER). A C3H1-type 1 zinc finger spans residues 170–198 (EKDRANCPFYSKTGACRFGDRCSRKHNFP). The RRM domain occupies 202-308 (PTLLIKGMFT…RQLQCEFCPV (107 aa)). A C3H1-type 2 zinc finger spans residues 310–337 (RWKMAICGLFEVQQCPRGKHCNFLHVFR). Residue Ser353 is modified to Phosphoserine. The disordered stretch occupies residues 354–462 (PDWTSSSFGK…QPQPQPQSDP (109 aa)). Over residues 364-379 (NSERRERASHYDEYYG) the composition is skewed to basic and acidic residues. The residue at position 389 (Ser389) is a Phosphoserine. The span at 392 to 403 (FYKRNGESDRKS) shows a compositional bias: basic and acidic residues. Over residues 404–417 (SSRHRVKKSHRYGM) the composition is skewed to basic residues.

Component of the U11/U12 snRNPs that are part of the U12-type spliceosome. Interacts (via RS domain) with SRSF1 and SRSF2. Interacts with U2AF2/U2AF65. Phosphorylated in the RS domain by SRPK1.

It is found in the nucleus. Its function is as follows. Pre-mRNA-binding protein required for splicing of both U2- and U12-type introns. Selectively interacts with the 3'-splice site of U2- and U12-type pre-mRNAs and promotes different steps in U2 and U12 intron splicing. Recruited to U12 pre-mRNAs in an ATP-dependent manner and is required for assembly of the prespliceosome, a precursor to other spliceosomal complexes. For U2-type introns, it is selectively and specifically required for the second step of splicing. The protein is U2 small nuclear ribonucleoprotein auxiliary factor 35 kDa subunit-related protein 2 (Zrsr2) of Mus musculus (Mouse).